A 341-amino-acid chain; its full sequence is tRNA N6-adenosine threonylcarbamoyltransferase (341 aa).

The Fe cation site is built by histidine 111 and histidine 115. Residues 133 to 137 (AVSGG), aspartate 166, glycine 179, aspartate 183, and asparagine 273 contribute to the substrate site. Residue aspartate 301 participates in Fe cation binding.

It belongs to the KAE1 / TsaD family. It depends on Fe(2+) as a cofactor.

It localises to the cytoplasm. The enzyme catalyses L-threonylcarbamoyladenylate + adenosine(37) in tRNA = N(6)-L-threonylcarbamoyladenosine(37) in tRNA + AMP + H(+). Its function is as follows. Required for the formation of a threonylcarbamoyl group on adenosine at position 37 (t(6)A37) in tRNAs that read codons beginning with adenine. Is involved in the transfer of the threonylcarbamoyl moiety of threonylcarbamoyl-AMP (TC-AMP) to the N6 group of A37, together with TsaE and TsaB. TsaD likely plays a direct catalytic role in this reaction. The polypeptide is tRNA N6-adenosine threonylcarbamoyltransferase (Geotalea daltonii (strain DSM 22248 / JCM 15807 / FRC-32) (Geobacter daltonii)).